The primary structure comprises 192 residues: Phosphoheptose isomerase (192 aa).

Positions 35–192 (LIETLENQGK…CIERHFAHKN (158 aa)) constitute an SIS domain. 50–52 (NGG) is a substrate binding site. Residues H59 and E63 each contribute to the Zn(2+) site. Residues E63, 92 to 93 (ND), 118 to 120 (STS), S123, and Q170 each bind substrate. Q170 and H178 together coordinate Zn(2+).

Belongs to the SIS family. GmhA subfamily. In terms of assembly, homotetramer. Requires Zn(2+) as cofactor.

Its subcellular location is the cytoplasm. The enzyme catalyses 2 D-sedoheptulose 7-phosphate = D-glycero-alpha-D-manno-heptose 7-phosphate + D-glycero-beta-D-manno-heptose 7-phosphate. It functions in the pathway carbohydrate biosynthesis; D-glycero-D-manno-heptose 7-phosphate biosynthesis; D-glycero-alpha-D-manno-heptose 7-phosphate and D-glycero-beta-D-manno-heptose 7-phosphate from sedoheptulose 7-phosphate: step 1/1. In terms of biological role, catalyzes the isomerization of sedoheptulose 7-phosphate in D-glycero-D-manno-heptose 7-phosphate. In Helicobacter pylori (strain P12), this protein is Phosphoheptose isomerase.